We begin with the raw amino-acid sequence, 120 residues long: MFVLSGYDALLIFLLLSALVPVLALTISYLIRPKGSGAFRTTTYESGVDPRGDSWIQFNIRYYMFALVFVVFDVETVFLYPWAVAFNQLGLLAFIEALIFIAILVVALVYAWRKGALEWT.

3 helical membrane passes run 11–31, 64–84, and 89–109; these read LIFLLLSALVPVLALTISYLI, MFALVFVVFDVETVFLYPWAV, and LGLLAFIEALIFIAILVVALV.

It belongs to the complex I subunit 3 family. NDH-1 can be composed of about 15 different subunits; different subcomplexes with different compositions have been identified which probably have different functions.

The protein resides in the cell inner membrane. The enzyme catalyses a plastoquinone + NADH + (n+1) H(+)(in) = a plastoquinol + NAD(+) + n H(+)(out). The catalysed reaction is a plastoquinone + NADPH + (n+1) H(+)(in) = a plastoquinol + NADP(+) + n H(+)(out). NDH-1 shuttles electrons from an unknown electron donor, via FMN and iron-sulfur (Fe-S) centers, to quinones in the respiratory and/or the photosynthetic chain. The immediate electron acceptor for the enzyme in this species is believed to be plastoquinone. Couples the redox reaction to proton translocation, and thus conserves the redox energy in a proton gradient. Cyanobacterial NDH-1 also plays a role in inorganic carbon-concentration. The polypeptide is NAD(P)H-quinone oxidoreductase subunit 3 (Gloeobacter violaceus (strain ATCC 29082 / PCC 7421)).